The primary structure comprises 248 residues: 4-hydroxy-tetrahydrodipicolinate reductase (248 aa).

Residues 74–76 (GTT) and 99–102 (SANF) each bind NAD(+). His134 (proton donor/acceptor) is an active-site residue. His135 contacts (S)-2,3,4,5-tetrahydrodipicolinate. Residue Lys138 is the Proton donor of the active site. Position 144–145 (144–145 (GT)) interacts with (S)-2,3,4,5-tetrahydrodipicolinate.

Belongs to the DapB family.

It is found in the cytoplasm. The enzyme catalyses (S)-2,3,4,5-tetrahydrodipicolinate + NAD(+) + H2O = (2S,4S)-4-hydroxy-2,3,4,5-tetrahydrodipicolinate + NADH + H(+). It carries out the reaction (S)-2,3,4,5-tetrahydrodipicolinate + NADP(+) + H2O = (2S,4S)-4-hydroxy-2,3,4,5-tetrahydrodipicolinate + NADPH + H(+). The protein operates within amino-acid biosynthesis; L-lysine biosynthesis via DAP pathway; (S)-tetrahydrodipicolinate from L-aspartate: step 4/4. Its function is as follows. Catalyzes the conversion of 4-hydroxy-tetrahydrodipicolinate (HTPA) to tetrahydrodipicolinate. This chain is 4-hydroxy-tetrahydrodipicolinate reductase, found in Chlorobium phaeobacteroides (strain DSM 266 / SMG 266 / 2430).